The primary structure comprises 287 residues: Phosphatidylserine decarboxylase proenzyme (287 aa).

Catalysis depends on charge relay system; for autoendoproteolytic cleavage activity residues Asp-90, His-147, and Ser-252. Residue Ser-252 is the Schiff-base intermediate with substrate; via pyruvic acid; for decarboxylase activity of the active site. Ser-252 is subject to Pyruvic acid (Ser); by autocatalysis.

Belongs to the phosphatidylserine decarboxylase family. PSD-B subfamily. Prokaryotic type I sub-subfamily. Heterodimer of a large membrane-associated beta subunit and a small pyruvoyl-containing alpha subunit. The cofactor is pyruvate. In terms of processing, is synthesized initially as an inactive proenzyme. Formation of the active enzyme involves a self-maturation process in which the active site pyruvoyl group is generated from an internal serine residue via an autocatalytic post-translational modification. Two non-identical subunits are generated from the proenzyme in this reaction, and the pyruvate is formed at the N-terminus of the alpha chain, which is derived from the carboxyl end of the proenzyme. The autoendoproteolytic cleavage occurs by a canonical serine protease mechanism, in which the side chain hydroxyl group of the serine supplies its oxygen atom to form the C-terminus of the beta chain, while the remainder of the serine residue undergoes an oxidative deamination to produce ammonia and the pyruvoyl prosthetic group on the alpha chain. During this reaction, the Ser that is part of the protease active site of the proenzyme becomes the pyruvoyl prosthetic group, which constitutes an essential element of the active site of the mature decarboxylase.

The protein resides in the cell membrane. The enzyme catalyses a 1,2-diacyl-sn-glycero-3-phospho-L-serine + H(+) = a 1,2-diacyl-sn-glycero-3-phosphoethanolamine + CO2. Its pathway is phospholipid metabolism; phosphatidylethanolamine biosynthesis; phosphatidylethanolamine from CDP-diacylglycerol: step 2/2. Functionally, catalyzes the formation of phosphatidylethanolamine (PtdEtn) from phosphatidylserine (PtdSer). This chain is Phosphatidylserine decarboxylase proenzyme, found in Pseudomonas putida (strain GB-1).